The sequence spans 133 residues: UPF0344 protein SH1980 (133 aa).

The next 4 membrane-spanning stretches (helical) occupy residues 1–21 (MLHMHIASWALTIILYVIAFL), 42–62 (VFMLLTLFSGFWLLIQEFMAA), 71–91 (MLLTLKMLCGIAVVALMEVSI), and 103–123 (LFWATIILIIITMSLGIILPW).

It belongs to the UPF0344 family.

It is found in the cell membrane. The chain is UPF0344 protein SH1980 from Staphylococcus haemolyticus (strain JCSC1435).